Reading from the N-terminus, the 550-residue chain is MPIGNLGNNVNGNHLIPPAPPLPSQTDGAARGGTGHLISSTGALGSRSLFSPLRNSMADSVDSRDIPGLPTNPSRLAAATSETCLLGGFEVLHDKGPLDILNTQIGPSAFRVEVQADGTHAAIGEKNGLEVSVTLSPQEWSSLQSIDTEGKNRFVFTGGRGGSGHPMVTVASDIAEARTKILAKLDPDNHGGRQPKDVDTRSVGVGSASGIDDGVVSETHTSTTNSSVRSDPKFWVSVGAIAAGLAGLAATGIAQALALTPEPDDPTTTDPDQAANAAESATKDQLTQEAFKNPENQKVNIDANGNAIPSGELKDDIVEQIAQQAKEAGEVARQQAVESNAQAQQRYEDQHARRQEELQLSSGIGYGLSSALIVAGGIGAGVTTALHRRNQPAEQTTTTTTHTVVQQQTGGNTPAQGGTDATRAEDASLNRRDSQGSVASTHWSDSSSEVVNPYAEVGGARNSLSAHQPEEHIYDEVAADPGYSVIQNFSGSGPVTGRLIGTPGQGIQSTYALLANSGGLRLGMGGLTSGGESAVSSVNAAPTPGPVRFV.

The span at 1–13 shows a compositional bias: low complexity; the sequence is MPIGNLGNNVNGN. Disordered regions lie at residues 1 to 38 and 185 to 228; these read MPIG…GHLI and LDPD…NSSV. The Cytoplasmic portion of the chain corresponds to 1–233; it reads MPIGNLGNNV…TNSSVRSDPK (233 aa). Residues 185 to 200 show a composition bias toward basic and acidic residues; it reads LDPDNHGGRQPKDVDT. Residues 218 to 228 show a composition bias toward polar residues; that stretch reads ETHTSTTNSSV. A helical transmembrane segment spans residues 234–254; it reads FWVSVGAIAAGLAGLAATGIA. The Extracellular portion of the chain corresponds to 255–362; sequence QALALTPEPD…RRQEELQLSS (108 aa). Disordered regions lie at residues 260–285 and 332–354; these read TPEP…TKDQ and ARQQ…HARR. Residues 336-345 are compositionally biased toward polar residues; it reads AVESNAQAQQ. The helical transmembrane segment at 363–383 threads the bilayer; sequence GIGYGLSSALIVAGGIGAGVT. Topologically, residues 384–550 are cytoplasmic; it reads TALHRRNQPA…APTPGPVRFV (167 aa). The interval 389–449 is disordered; it reads RNQPAEQTTT…STHWSDSSSE (61 aa). Residues 395 to 409 show a composition bias toward low complexity; that stretch reads QTTTTTTHTVVQQQT. A compositionally biased stretch (basic and acidic residues) spans 422-434; that stretch reads TRAEDASLNRRDS. The span at 435–449 shows a compositional bias: polar residues; the sequence is QGSVASTHWSDSSSE. The Essential for NCK-independent actin pedestal formation motif lies at 452–454; sequence NPY. 2 positions are modified to phosphotyrosine: Tyr454 and Tyr474.

It belongs to the Tir receptor family. Interacts with intimin. Interacts with host proteins NCK1, NCK2, alpha-actinin and BAIAP2. Post-translationally, phosphorylated on Tyr-474 by host kinases. Tyr-454 can also be phosphorylated, although at lower efficiency. Phosphorylation is stimulated by clustering of Tir by intimin.

Its subcellular location is the secreted. It localises to the host cell membrane. In terms of biological role, multifunctional protein that is required for efficient pedestal formation in host epithelial cells during infection. The extracellular region acts as a receptor for bacterial intimin, allowing the bacterium to attach tightly to the host-cell surface. Simultaneously, the intracellular region initiates a signaling cascade in the host cell, which leads to actin polymerization and formation of actin pedestals at the sites of bacterial adhesion. In strain E2348/69, acts mainly via the host adaptor proteins NCK1 and NCK2. Once clustered and phosphorylated at Tyr-474, Tir binds to NCK proteins, which in turn bind and activate host WASL/N-WASP, leading to actin polymerization. Can also trigger an inefficient, NCK-independent pedestal formation. This pathway involves phosphorylation of Tyr-454 and probably a putative host adaptor. Also acts via direct binding to the host cytoskeletal protein alpha-actinin in a NCK- and phosphotyrosine-independent manner. This interaction may stabilize the pedestal, but is not essential for its formation. The polypeptide is Translocated intimin receptor Tir (tir) (Escherichia coli O127:H6 (strain E2348/69 / EPEC)).